Consider the following 285-residue polypeptide: Dermonecrotic toxin LlSicTox-alphaIII2 (285 aa).

The active site involves His-12. Mg(2+) is bound by residues Glu-32 and Asp-34. The active-site Nucleophile is His-47. Cys-51 and Cys-57 are disulfide-bonded. Asp-91 is a binding site for Mg(2+).

It belongs to the arthropod phospholipase D family. Class I subfamily. It depends on Mg(2+) as a cofactor. As to expression, expressed by the venom gland.

The protein localises to the secreted. It catalyses the reaction an N-(acyl)-sphingosylphosphocholine = an N-(acyl)-sphingosyl-1,3-cyclic phosphate + choline. It carries out the reaction an N-(acyl)-sphingosylphosphoethanolamine = an N-(acyl)-sphingosyl-1,3-cyclic phosphate + ethanolamine. The enzyme catalyses a 1-acyl-sn-glycero-3-phosphocholine = a 1-acyl-sn-glycero-2,3-cyclic phosphate + choline. The catalysed reaction is a 1-acyl-sn-glycero-3-phosphoethanolamine = a 1-acyl-sn-glycero-2,3-cyclic phosphate + ethanolamine. Functionally, dermonecrotic toxins cleave the phosphodiester linkage between the phosphate and headgroup of certain phospholipids (sphingolipid and lysolipid substrates), forming an alcohol (often choline) and a cyclic phosphate. This toxin acts on sphingomyelin (SM) (228.2 U/mg). It may also act on ceramide phosphoethanolamine (CPE), lysophosphatidylcholine (LPC) and lysophosphatidylethanolamine (LPE), but not on lysophosphatidylserine (LPS), and lysophosphatidylglycerol (LPG). It acts by transphosphatidylation, releasing exclusively cyclic phosphate products as second products. Induces dermonecrosis, hemolysis, increased vascular permeability, edema, inflammatory response, and platelet aggregation. Is lethal to mice. The chain is Dermonecrotic toxin LlSicTox-alphaIII2 from Loxosceles laeta (South American recluse spider).